Consider the following 399-residue polypeptide: Beta-1,6-galactosyltransferase GALT31A (399 aa).

Over 1 to 12 (MGMGRYQKSATS) the chain is Cytoplasmic. The helical; Signal-anchor for type II membrane protein transmembrane segment at 13 to 35 (GVSARWVFVLCISSFLLGVLVVN) threads the bilayer. At 36 to 399 (RLLASFETVD…GDGAIWHSSF (364 aa)) the chain is on the lumenal side.

It belongs to the glycosyltransferase 31 family. Interacts with GALT29A. The cofactor is Mn(2+).

The protein resides in the golgi apparatus membrane. It participates in protein modification; protein glycosylation. In terms of biological role, beta-galactosyltransferase involved in elongation of beta-1,6-linked galactan side chains on arabinogalactan proteins. Required for the progression of embryogenesis beyond the globular stage. Beta-galactosyltransferase involved in the biosynthesis of type II arabinogalactan. Transfers galactose from UDP-galactose to a mixture of various oligosaccharides derived from arabinogalactan proteins. Forms a complex with GALT29A that can work cooperatively to enhance the activities of adding galactose residues at O6 positions to beta-1,6-linked galactan and beta-1,3-linked galactan. The polypeptide is Beta-1,6-galactosyltransferase GALT31A (Arabidopsis thaliana (Mouse-ear cress)).